A 168-amino-acid polypeptide reads, in one-letter code: Peptide deformylase 1 (168 aa).

Fe cation contacts are provided by Cys-92 and His-134. Residue Glu-135 is part of the active site. His-138 is a binding site for Fe cation.

This sequence belongs to the polypeptide deformylase family. It depends on Fe(2+) as a cofactor.

The catalysed reaction is N-terminal N-formyl-L-methionyl-[peptide] + H2O = N-terminal L-methionyl-[peptide] + formate. Its function is as follows. Removes the formyl group from the N-terminal Met of newly synthesized proteins. Requires at least a dipeptide for an efficient rate of reaction. N-terminal L-methionine is a prerequisite for activity but the enzyme has broad specificity at other positions. The sequence is that of Peptide deformylase 1 from Pseudomonas syringae pv. tomato (strain ATCC BAA-871 / DC3000).